A 183-amino-acid chain; its full sequence is Protein Syd (183 aa).

The protein belongs to the Syd family.

It is found in the cell inner membrane. Its function is as follows. Interacts with the SecY protein in vivo. May bind preferentially to an uncomplexed state of SecY, thus functioning either as a chelating agent for excess SecY in the cell or as a regulatory factor that negatively controls the translocase function. The sequence is that of Protein Syd from Yersinia pestis bv. Antiqua (strain Antiqua).